The chain runs to 211 residues: MNQIIFSQFGTPIERVEIALQALRHGRGVLVLDNEDRENEGDMIFAAEKMTIEQMALAIRYGSGIICLCLTEERRQQLELPMMVEHNTSHYQTAFTVTIEAAEGVTTGVSAADRITTIRTAIKNDAIPEDLNRPGHVFPLLAQPGGVLNRGGHTEAAIDLTLLAGLKPAGVLCEVTNEDGSMARALEIIAFSNQHNMPVLTINDLVAYRSR.

Residues 37–38 (RE), aspartate 42, 150–154 (RGGHT), and glutamate 174 contribute to the D-ribulose 5-phosphate site. Glutamate 38 lines the Mg(2+) pocket. Residue histidine 153 coordinates Mg(2+).

Belongs to the DHBP synthase family. Homodimer. Mg(2+) is required as a cofactor. The cofactor is Mn(2+).

It carries out the reaction D-ribulose 5-phosphate = (2S)-2-hydroxy-3-oxobutyl phosphate + formate + H(+). It participates in cofactor biosynthesis; riboflavin biosynthesis; 2-hydroxy-3-oxobutyl phosphate from D-ribulose 5-phosphate: step 1/1. In terms of biological role, catalyzes the conversion of D-ribulose 5-phosphate to formate and 3,4-dihydroxy-2-butanone 4-phosphate. The chain is 3,4-dihydroxy-2-butanone 4-phosphate synthase from Baumannia cicadellinicola subsp. Homalodisca coagulata.